A 258-amino-acid polypeptide reads, in one-letter code: 6-phosphogluconolactonase (258 aa).

Ala2 is subject to N-acetylalanine. Position 49 is a phosphoserine (Ser49). Position 180 is an N6-acetyllysine (Lys180).

Belongs to the glucosamine/galactosamine-6-phosphate isomerase family. 6-phosphogluconolactonase subfamily.

Its subcellular location is the cytoplasm. The catalysed reaction is 6-phospho-D-glucono-1,5-lactone + H2O = 6-phospho-D-gluconate + H(+). Its pathway is carbohydrate degradation; pentose phosphate pathway; D-ribulose 5-phosphate from D-glucose 6-phosphate (oxidative stage): step 2/3. In terms of biological role, hydrolysis of 6-phosphogluconolactone to 6-phosphogluconate. This is 6-phosphogluconolactonase (PGLS) from Bos taurus (Bovine).